The following is a 360-amino-acid chain: tRNA/tmRNA (uracil-C(5))-methyltransferase (360 aa).

Residues Gln-185, Tyr-213, Asn-218, Glu-234, and Asp-294 each contribute to the S-adenosyl-L-methionine site. Catalysis depends on Cys-319, which acts as the Nucleophile. Glu-353 serves as the catalytic Proton acceptor.

Belongs to the class I-like SAM-binding methyltransferase superfamily. RNA M5U methyltransferase family. TrmA subfamily.

The catalysed reaction is uridine(54) in tRNA + S-adenosyl-L-methionine = 5-methyluridine(54) in tRNA + S-adenosyl-L-homocysteine + H(+). It carries out the reaction uridine(341) in tmRNA + S-adenosyl-L-methionine = 5-methyluridine(341) in tmRNA + S-adenosyl-L-homocysteine + H(+). In terms of biological role, dual-specificity methyltransferase that catalyzes the formation of 5-methyluridine at position 54 (m5U54) in all tRNAs, and that of position 341 (m5U341) in tmRNA (transfer-mRNA). The chain is tRNA/tmRNA (uracil-C(5))-methyltransferase from Nitratiruptor sp. (strain SB155-2).